The following is a 299-amino-acid chain: Fluorinase (299 aa).

S-adenosyl-L-methionine contacts are provided by residues Asp15, 20 to 22 (DDS), Tyr76, Ser157, Asp210, Asn215, 269 to 270 (SR), and 277 to 279 (RNA).

It belongs to the SAM hydrolase / SAM-dependent halogenase family.

It catalyses the reaction fluoride + S-adenosyl-L-methionine = 5'-deoxy-5'-fluoroadenosine + L-methionine. With respect to regulation, activity is not severely affected by most metal ions (Mg(2+), Mn(2+), Co(2+) and Fe(2+)), but both Cu(2+) and Zn(2+) are strong inhibitors. Functionally, catalyzes the formation of a C-F bond by combining S-adenosyl-L-methionine (SAM) and fluoride to generate 5'-fluoro-5'-deoxyadenosine (5'-FDA) and L-methionine. This Actinopolyspora mzabensis protein is Fluorinase.